A 437-amino-acid chain; its full sequence is Aminopeptidase G (437 aa).

Active-site residues include Cys-70, His-361, and Asn-382.

Belongs to the peptidase C1 family.

Its subcellular location is the cytoplasm. This chain is Aminopeptidase G (pepG), found in Lactobacillus delbrueckii subsp. lactis.